We begin with the raw amino-acid sequence, 241 residues long: Transcription initiation factor TFIID subunit 14 (241 aa).

The region spanning 1 to 137 is the YEATS domain; it reads MTTVKRTVRL…PGLLKALTAT (137 aa). The segment at 141–169 is disordered; that stretch reads PGYSDEGEEARKDKRKNESEVGAGKKKAK. Over residues 149–159 the composition is skewed to basic and acidic residues; the sequence is EARKDKRKNES.

Belongs to the TAF14 family. In terms of assembly, component of the fcp1/TFIIF/polII complex via interaction of tfg3 with both tfg1/TFIIF-alpha and tfg2/TFIIF-beta subunits. Component of the SWI/SNF global transcription activator complex composed of at least arp9, arp42, snf5, snf22, snf30, sbf59, sol1, ssr1, ssr2, ssr3, ssr4 and tfg3. Also interacts with the TATA-binding protein (TBP). Component of the mst2 complex composed of at least eaf6, mst2, nto1, pdp3, ptf1, ptf2 and tfg3.

The protein localises to the nucleus. The protein resides in the nucleoplasm. In terms of biological role, functions as a component of the DNA-binding general transcription factor complex TFIID, and the RNA polymerase II associated general transcription factor complex TFIIF. Binding of TFIID to a promoter (with or without TATA element) is the initial step in preinitiation complex (PIC) formation. TFIID plays a key role in the regulation of gene expression by RNA polymerase II through different activities such as transcription activator interaction, core promoter recognition and selectivity, TFIIA and TFIIB interaction, facilitation of DNA opening and initiation of transcription. TFIIF is essential for the initiation of transcription by RNA polymerase II. TFIIF functions include the recruitment of RNA polymerase II to the promoter bound DNA-TBP-TFIIB complex, decreasing the affinity of RNA polymerase II for non-specific DNA, allowing for the subsequent recruitment of TFIIE and TFIIH, and facilitating RNA polymerase II elongation. The TAF14 subunit has stimulatory activity. Component of the SWI/SNF complex, an ATP-dependent chromatin remodeling complex, required for the positive and negative regulation of gene expression of a large number of genes. It changes chromatin structure by altering DNA-histone contacts within a nucleosome, leading eventually to a change in nucleosome position, thus facilitating or repressing binding of gene-specific transcription factors. Component of the mst2 complex which is a highly specific H3 lysine 14 (H3K14) acetyltransferase that functions together with gcn5 to regulate global levels of H3K14 acetylation (H3K14ac), critical for DNA damage checkpoint activation. The polypeptide is Transcription initiation factor TFIID subunit 14 (tfg3) (Schizosaccharomyces pombe (strain 972 / ATCC 24843) (Fission yeast)).